The following is a 112-amino-acid chain: Putative pterin-4-alpha-carbinolamine dehydratase (112 aa).

It belongs to the pterin-4-alpha-carbinolamine dehydratase family.

It carries out the reaction (4aS,6R)-4a-hydroxy-L-erythro-5,6,7,8-tetrahydrobiopterin = (6R)-L-erythro-6,7-dihydrobiopterin + H2O. This is Putative pterin-4-alpha-carbinolamine dehydratase from Shewanella putrefaciens (strain CN-32 / ATCC BAA-453).